We begin with the raw amino-acid sequence, 377 residues long: Succinyl-diaminopimelate desuccinylase (377 aa).

His68 lines the Zn(2+) pocket. Asp70 is an active-site residue. Zn(2+) is bound at residue Asp101. The Proton acceptor role is filled by Glu135. Zn(2+)-binding residues include Glu136, Glu164, and His350.

Belongs to the peptidase M20A family. DapE subfamily. As to quaternary structure, homodimer. Requires Zn(2+) as cofactor. It depends on Co(2+) as a cofactor.

It catalyses the reaction N-succinyl-(2S,6S)-2,6-diaminopimelate + H2O = (2S,6S)-2,6-diaminopimelate + succinate. The protein operates within amino-acid biosynthesis; L-lysine biosynthesis via DAP pathway; LL-2,6-diaminopimelate from (S)-tetrahydrodipicolinate (succinylase route): step 3/3. Functionally, catalyzes the hydrolysis of N-succinyl-L,L-diaminopimelic acid (SDAP), forming succinate and LL-2,6-diaminopimelate (DAP), an intermediate involved in the bacterial biosynthesis of lysine and meso-diaminopimelic acid, an essential component of bacterial cell walls. This is Succinyl-diaminopimelate desuccinylase from Vibrio cholerae serotype O1 (strain ATCC 39541 / Classical Ogawa 395 / O395).